The following is a 303-amino-acid chain: Glutamyl-Q tRNA(Asp) synthetase (303 aa).

Residues 9-13 (RFAPS) and Glu-45 each bind L-glutamate. A 'HIGH' region motif is present at residues 12–22 (PSPSGSLHFGS). Residues Cys-101, Cys-103, Tyr-115, and Cys-119 each coordinate Zn(2+). Tyr-172 and Arg-190 together coordinate L-glutamate. The short motif at 228-232 (KLSKQ) is the 'KMSKS' region element. Lys-231 is an ATP binding site.

It belongs to the class-I aminoacyl-tRNA synthetase family. GluQ subfamily. It depends on Zn(2+) as a cofactor.

Its function is as follows. Catalyzes the tRNA-independent activation of glutamate in presence of ATP and the subsequent transfer of glutamate onto a tRNA(Asp). Glutamate is transferred on the 2-amino-5-(4,5-dihydroxy-2-cyclopenten-1-yl) moiety of the queuosine in the wobble position of the QUC anticodon. In Serratia proteamaculans (strain 568), this protein is Glutamyl-Q tRNA(Asp) synthetase.